Consider the following 660-residue polypeptide: Phosphatidylinositol-binding clathrin assembly protein (660 aa).

Ser2 carries the N-acetylserine modification. The ENTH domain occupies 14–145; it reads QHSVTGSAVS…VSYRQVAFDF (132 aa). A phosphoserine mark is found at Ser16 and Ser20. Residues 221–294 are interaction with PIMREG; it reads KYFDMKKNQC…LEGKKIKDST (74 aa). Lys238 is covalently cross-linked (Glycyl lysine isopeptide (Lys-Gly) (interchain with G-Cter in SUMO2)). Residues Ser303 and Ser315 each carry the phosphoserine modification. Positions 556–566 are enriched in polar residues; it reads GTTKNDVSWSQ. Residues 556–580 are disordered; that stretch reads GTTKNDVSWSQPGEKKLTGGSNWQP.

This sequence belongs to the PICALM/SNAP91 family. In terms of assembly, binds to clathrin; involves primarily the C-terminal sequences, but the full-length protein is required for full binding capacity. Binds phosphatidylinositol 4,5- bisphosphate. Interacts with PIMREG; this interaction may change the subcellular location into the nucleus. Interacts with AP2A1 (via its alpha-appendage domain). Interacts (via N-terminus) with VAMP2; VAMP3; VAMP7 and VAMP8 (Via N-terminus). Interacts with LC3/MAP1LC3A. Skins and livers of 1-week-old mice.

It is found in the cell membrane. The protein resides in the membrane. It localises to the clathrin-coated pit. The protein localises to the golgi apparatus. Its subcellular location is the cytoplasmic vesicle. It is found in the clathrin-coated vesicle. The protein resides in the nucleus. Its function is as follows. Cytoplasmic adapter protein that plays a critical role in clathrin-mediated endocytosis which is important in processes such as internalization of cell receptors, synaptic transmission or removal of apoptotic cells. Recruits AP-2 and attaches clathrin triskelions to the cytoplasmic side of plasma membrane leading to clathrin-coated vesicles (CCVs) assembly. Furthermore, regulates clathrin-coated vesicle size and maturation by directly sensing and driving membrane curvature. In addition to binding to clathrin, mediates the endocytosis of small R-SNARES (Soluble NSF Attachment Protein REceptors) between plasma membranes and endosomes including VAMP2, VAMP3, VAMP4, VAMP7 or VAMP8. In turn, PICALM-dependent SNARE endocytosis is required for the formation and maturation of autophagic precursors. Modulates thereby autophagy and the turnover of autophagy substrates such as MAPT/TAU or amyloid precursor protein cleaved C-terminal fragment (APP-CTF). In Mus musculus (Mouse), this protein is Phosphatidylinositol-binding clathrin assembly protein (Picalm).